A 207-amino-acid polypeptide reads, in one-letter code: Dephospho-CoA kinase (207 aa).

A DPCK domain is found at 4–203 (VIGLTGGIAS…EEGYIEKPNY (200 aa)). Residue 12-17 (ASGKST) coordinates ATP.

It belongs to the CoaE family.

It localises to the cytoplasm. The catalysed reaction is 3'-dephospho-CoA + ATP = ADP + CoA + H(+). Its pathway is cofactor biosynthesis; coenzyme A biosynthesis; CoA from (R)-pantothenate: step 5/5. In terms of biological role, catalyzes the phosphorylation of the 3'-hydroxyl group of dephosphocoenzyme A to form coenzyme A. The chain is Dephospho-CoA kinase from Staphylococcus aureus (strain bovine RF122 / ET3-1).